The primary structure comprises 502 residues: Glutamate--tRNA ligase (502 aa).

The short motif at 21–31 (PSPTGVPHVGM) is the 'HIGH' region element. The 'KMSKS' region signature appears at 265 to 269 (KLSKR). Lys-268 is a binding site for ATP.

The protein belongs to the class-I aminoacyl-tRNA synthetase family. Glutamate--tRNA ligase type 1 subfamily. As to quaternary structure, monomer.

The protein localises to the cytoplasm. The catalysed reaction is tRNA(Glu) + L-glutamate + ATP = L-glutamyl-tRNA(Glu) + AMP + diphosphate. In terms of biological role, catalyzes the attachment of glutamate to tRNA(Glu) in a two-step reaction: glutamate is first activated by ATP to form Glu-AMP and then transferred to the acceptor end of tRNA(Glu). This Mycobacterium leprae (strain TN) protein is Glutamate--tRNA ligase.